We begin with the raw amino-acid sequence, 242 residues long: Probable transcriptional regulatory protein EUBREC_1961 (242 aa).

Belongs to the TACO1 family.

The protein localises to the cytoplasm. The polypeptide is Probable transcriptional regulatory protein EUBREC_1961 (Agathobacter rectalis (strain ATCC 33656 / DSM 3377 / JCM 17463 / KCTC 5835 / VPI 0990) (Eubacterium rectale)).